The chain runs to 59 residues: Potassium channel toxin alpha-KTx 16.7 (59 aa).

An N-terminal signal peptide occupies residues 1–22 (MKILSILLIALVICSISICTEA). Disulfide bonds link Cys30/Cys51, Cys36/Cys56, and Cys40/Cys58.

Belongs to the short scorpion toxin superfamily. Potassium channel inhibitor family. Alpha-KTx 16 subfamily. In terms of tissue distribution, expressed by the venom gland.

Its subcellular location is the secreted. In terms of biological role, may play a role in blocking voltage-gated potassium channels Kv1.2/KCNA2, and Kv1.3/KCNA3. Blocks the voltage-gated potassium channel Kv1.3/KCNA3, with an IC(50) of 118.3 +-55.8 nM. The polypeptide is Potassium channel toxin alpha-KTx 16.7 (Mesobuthus gibbosus (Mediterranean checkered scorpion)).